Here is a 316-residue protein sequence, read N- to C-terminus: Transaldolase A (316 aa).

Catalysis depends on Lys131, which acts as the Schiff-base intermediate with substrate.

The protein belongs to the transaldolase family. Type 1 subfamily. As to quaternary structure, homodimer.

It localises to the cytoplasm. It catalyses the reaction D-sedoheptulose 7-phosphate + D-glyceraldehyde 3-phosphate = D-erythrose 4-phosphate + beta-D-fructose 6-phosphate. The protein operates within carbohydrate degradation; pentose phosphate pathway; D-glyceraldehyde 3-phosphate and beta-D-fructose 6-phosphate from D-ribose 5-phosphate and D-xylulose 5-phosphate (non-oxidative stage): step 2/3. Transaldolase is important for the balance of metabolites in the pentose-phosphate pathway. This Shigella flexneri protein is Transaldolase A.